A 423-amino-acid polypeptide reads, in one-letter code: UPF0229 protein VV2350 (423 aa).

The tract at residues 81-111 is disordered; it reads QFITGDKIERPKGGQGGGGAGDGDASADGEG. Residues 93–102 show a composition bias toward gly residues; it reads GGQGGGGAGD.

The protein belongs to the UPF0229 family.

This Vibrio vulnificus (strain YJ016) protein is UPF0229 protein VV2350.